We begin with the raw amino-acid sequence, 425 residues long: Dihydroorotase (425 aa).

Positions 56 and 58 each coordinate Zn(2+). Substrate-binding positions include 58–60 (HYR) and asparagine 90. The Zn(2+) site is built by aspartate 148, histidine 175, and histidine 228. Asparagine 274 contributes to the substrate binding site. Position 301 (aspartate 301) interacts with Zn(2+). Aspartate 301 is an active-site residue. Substrate-binding positions include histidine 305 and 319-320 (FG).

This sequence belongs to the metallo-dependent hydrolases superfamily. DHOase family. Class I DHOase subfamily. Zn(2+) is required as a cofactor.

The catalysed reaction is (S)-dihydroorotate + H2O = N-carbamoyl-L-aspartate + H(+). It participates in pyrimidine metabolism; UMP biosynthesis via de novo pathway; (S)-dihydroorotate from bicarbonate: step 3/3. Functionally, catalyzes the reversible cyclization of carbamoyl aspartate to dihydroorotate. The sequence is that of Dihydroorotase from Lactobacillus johnsonii (strain CNCM I-12250 / La1 / NCC 533).